Here is a 205-residue protein sequence, read N- to C-terminus: Transcriptional regulator GfcR (205 aa).

It belongs to the purine/pyrimidine phosphoribosyltransferase family. GfcR subfamily.

The protein is Transcriptional regulator GfcR of Methanococcus maripaludis (strain C5 / ATCC BAA-1333).